The primary structure comprises 206 residues: Peptidyl-tRNA hydrolase (206 aa).

Y19 is a binding site for tRNA. The Proton acceptor role is filled by H24. TRNA contacts are provided by F70, N72, and N118.

Belongs to the PTH family. Monomer.

It localises to the cytoplasm. The catalysed reaction is an N-acyl-L-alpha-aminoacyl-tRNA + H2O = an N-acyl-L-amino acid + a tRNA + H(+). Its function is as follows. Hydrolyzes ribosome-free peptidyl-tRNAs (with 1 or more amino acids incorporated), which drop off the ribosome during protein synthesis, or as a result of ribosome stalling. Functionally, catalyzes the release of premature peptidyl moieties from peptidyl-tRNA molecules trapped in stalled 50S ribosomal subunits, and thus maintains levels of free tRNAs and 50S ribosomes. The chain is Peptidyl-tRNA hydrolase from Synechococcus sp. (strain CC9902).